We begin with the raw amino-acid sequence, 270 residues long: tRNA pseudouridine synthase A (270 aa).

Asp-60 serves as the catalytic Nucleophile. Substrate is bound at residue Tyr-118.

This sequence belongs to the tRNA pseudouridine synthase TruA family. In terms of assembly, homodimer.

It catalyses the reaction uridine(38/39/40) in tRNA = pseudouridine(38/39/40) in tRNA. Its function is as follows. Formation of pseudouridine at positions 38, 39 and 40 in the anticodon stem and loop of transfer RNAs. This Salmonella typhimurium (strain LT2 / SGSC1412 / ATCC 700720) protein is tRNA pseudouridine synthase A.